The sequence spans 260 residues: MNAFDSQAEDSPTSLGRSLRRRPLARKKLSEMVEEELEQMIRRHEFGEGEQLPSERELMAFFNVGRPSVREALAALKRKGLVQINNGERARVSRPSADTIISELSGMAKDFLTHPGGIAHFEQLRLFFESSLVRYAAEHATDEQIALLAKALEINSQSLDDNALFIRSDVEFHRVLAEIPGNPIFMAIHVALLDWLIAARPSVPDRELHEHNNVSYQQHIVIVDAIRQRDPDKADRALQTHLNSVSATWHALGKKSQKMR.

Residues 1-22 (MNAFDSQAEDSPTSLGRSLRRR) are disordered. In terms of domain architecture, HTH gntR-type spans 27–95 (KKLSEMVEEE…NGERARVSRP (69 aa)). Positions 55-74 (ERELMAFFNVGRPSVREALA) form a DNA-binding region, H-T-H motif.

It belongs to the NanR family.

In terms of biological role, transcriptional repressor that controls expression of the genes required for the catabolism of sialic acids. In Salmonella newport (strain SL254), this protein is HTH-type transcriptional repressor NanR.